Reading from the N-terminus, the 88-residue chain is Putative carnobacteriocin-BM1 immunity protein (88 aa).

Functionally, could impart immunity to carnobacteriocin-BM1 to naturally sensitive host strains. This chain is Putative carnobacteriocin-BM1 immunity protein, found in Carnobacterium maltaromaticum (Carnobacterium piscicola).